A 491-amino-acid polypeptide reads, in one-letter code: Anthranilate synthase component 1 (491 aa).

Residues Ser-49 and Pro-271 to Leu-273 each bind L-tryptophan. Residue Gly-306–Thr-307 participates in chorismate binding. Residue Glu-333 coordinates Mg(2+). Chorismate contacts are provided by residues Tyr-421, Arg-441, Gly-455–Gly-457, and Gly-457. Glu-470 provides a ligand contact to Mg(2+).

This sequence belongs to the anthranilate synthase component I family. As to quaternary structure, heterotetramer consisting of two non-identical subunits: a beta subunit (TrpG) and a large alpha subunit (TrpE). Mg(2+) is required as a cofactor.

The catalysed reaction is chorismate + L-glutamine = anthranilate + pyruvate + L-glutamate + H(+). It participates in amino-acid biosynthesis; L-tryptophan biosynthesis; L-tryptophan from chorismate: step 1/5. Its activity is regulated as follows. Feedback inhibited by tryptophan. In terms of biological role, part of a heterotetrameric complex that catalyzes the two-step biosynthesis of anthranilate, an intermediate in the biosynthesis of L-tryptophan. In the first step, the glutamine-binding beta subunit (TrpG) of anthranilate synthase (AS) provides the glutamine amidotransferase activity which generates ammonia as a substrate that, along with chorismate, is used in the second step, catalyzed by the large alpha subunit of AS (TrpE) to produce anthranilate. In the absence of TrpG, TrpE can synthesize anthranilate directly from chorismate and high concentrations of ammonia. In Neisseria meningitidis serogroup B (strain ATCC BAA-335 / MC58), this protein is Anthranilate synthase component 1 (trpE).